The primary structure comprises 558 residues: Glutamine--tRNA ligase (558 aa).

The short motif at 36–46 is the 'HIGH' region element; sequence PEPNGYLHIGH. ATP contacts are provided by residues 37-39 and 43-49; these read EPN and HIGHAKS. Asp-69 and Tyr-214 together coordinate L-glutamine. ATP contacts are provided by residues Thr-233, 263–264, and 271–273; these read RL and LSK. Positions 270-274 match the 'KMSKS' region motif; it reads LLSKR.

It belongs to the class-I aminoacyl-tRNA synthetase family. In terms of assembly, monomer.

Its subcellular location is the cytoplasm. It catalyses the reaction tRNA(Gln) + L-glutamine + ATP = L-glutaminyl-tRNA(Gln) + AMP + diphosphate. The polypeptide is Glutamine--tRNA ligase (Bradyrhizobium diazoefficiens (strain JCM 10833 / BCRC 13528 / IAM 13628 / NBRC 14792 / USDA 110)).